Reading from the N-terminus, the 202-residue chain is Ras-related protein RABD2c (202 aa).

GTP contacts are provided by residues 15 to 23, 33 to 40, 63 to 67, 121 to 124, and 151 to 153; these read GDSGVGKSC, YLDSYIST, DTAGQ, NKCD, and SAK. The Effector region signature appears at 37–45; that stretch reads YISTIGVDF. Positions 174-202 are disordered; sequence ASQPAGGSKPPTVQIRGQPVNQQSGCCSS. Polar residues predominate over residues 192–202; the sequence is PVNQQSGCCSS. 2 S-geranylgeranyl cysteine lipidation sites follow: Cys-199 and Cys-200.

Belongs to the small GTPase superfamily. Rab family.

It is found in the cell membrane. The protein localises to the golgi apparatus. The protein resides in the trans-Golgi network membrane. Its subcellular location is the golgi apparatus membrane. Its function is as follows. Protein transport. Regulator of membrane traffic from the Golgi apparatus towards the endoplasmic reticulum (ER). The chain is Ras-related protein RABD2c (RABD2C) from Arabidopsis thaliana (Mouse-ear cress).